A 681-amino-acid chain; its full sequence is T-box-containing protein 2 (681 aa).

The T-box DNA-binding region spans 149–323; it reads LWDQFSRAGT…NNPFAKGFRE (175 aa). 4 disordered regions span residues 316 to 351, 456 to 489, 521 to 558, and 589 to 611; these read PFAKGFREDGARAKKPRNQHNHFSDNDTSPYSEQRR, GITSHSPVQPVPHDNSFTYYNSSSPSSSDSNQSN, PNINIPNTVETNVHSSDSGIGSSPPTPSDDDASNLIPG, and ESGEANANSHTEDFSRNPACQSG. The span at 470–489 shows a compositional bias: low complexity; the sequence is NSFTYYNSSSPSSSDSNQSN. Positions 521–534 are enriched in polar residues; the sequence is PNINIPNTVETNVH.

As to quaternary structure, monomer. As to expression, differentiating muscle and tailbud tip.

Its subcellular location is the nucleus. Its function is as follows. Involved in the transcriptional regulation of genes required for muscle differentiation. Binds to a palindromic site (called T site) and activates gene transcription when bound to such a site. The polypeptide is T-box-containing protein 2 (T2) (Halocynthia roretzi (Sea squirt)).